A 334-amino-acid polypeptide reads, in one-letter code: Geranylgeranyl pyrophosphate synthase idtG (334 aa).

Isopentenyl diphosphate is bound by residues K49, R52, and H81. The Mg(2+) site is built by D88 and D92. R97 lines the dimethylallyl diphosphate pocket. An isopentenyl diphosphate-binding site is contributed by R98. K175, T176, and Q209 together coordinate dimethylallyl diphosphate. A Mg(2+)-binding site is contributed by D212. The dimethylallyl diphosphate site is built by N216, K226, and K236.

This sequence belongs to the FPP/GGPP synthase family. Requires Mg(2+) as cofactor.

It carries out the reaction isopentenyl diphosphate + dimethylallyl diphosphate = (2E)-geranyl diphosphate + diphosphate. The enzyme catalyses isopentenyl diphosphate + (2E)-geranyl diphosphate = (2E,6E)-farnesyl diphosphate + diphosphate. It catalyses the reaction isopentenyl diphosphate + (2E,6E)-farnesyl diphosphate = (2E,6E,10E)-geranylgeranyl diphosphate + diphosphate. The protein operates within secondary metabolite biosynthesis. Its function is as follows. Geranylgeranyl pyrophosphate synthase; part of the gene cluster that mediates the biosynthesis of paspalitrems, indole-diterpene (IDT) mycotoxins that are potent tremorgens in mammals. The geranylgeranyl diphosphate (GGPP) synthase idtG is proposed to catalyze the first step in IDT biosynthesis via catalysis of a series of iterative condensations of isopentenyl diphosphate (IPP) with dimethylallyl diphosphate (DMAPP), geranyl diphosphate (GPP), and farnesyl diphosphate (FPP), to form GGPP. Condensation of indole-3-glycerol phosphate with GGPP by the prenyltransferase idtC then forms 3-geranylgeranylindole (3-GGI). Epoxidation of the two terminal alkenes of the geranylgeranyl moiety by the FAD-dependent monooxygenase idtM, and cyclization by the terpene cyclase idtB then leads to the production of paspaline. The cytochrome P450 monooxygenase idtP then catalyzes oxidative elimination of the pendant methyl group at C-12 of paspaline and generates the C-10 ketone to yield 13-desoxypaxilline. The cytochrome P450 monooxygenase idtQ may catalyze the C-13 oxidation of 13-desoxypaxilline to afford paxilline. Considering that both paspalicine and paxilline were detected in C.paspali, idtQ also catalyzes the formation of paspalinine from 13-desoxypaxilline via paspalicine as an intermediate. Finally, the alpha-prenyltransferase idtF prenylates paspalinine at the C-20 or the C-21 positions to yield paspalitrems A and C, respectively. The hydroxylation of paspalitrem A at C-32 by a still unknown oxidase affords paspalitrem B. The polypeptide is Geranylgeranyl pyrophosphate synthase idtG (Claviceps paspali (Rye ergot fungus)).